A 197-amino-acid polypeptide reads, in one-letter code: Putative NADH dehydrogenase/NAD(P)H nitroreductase Plav_3612 (197 aa).

It belongs to the nitroreductase family. HadB/RutE subfamily. FMN is required as a cofactor.

This is Putative NADH dehydrogenase/NAD(P)H nitroreductase Plav_3612 from Parvibaculum lavamentivorans (strain DS-1 / DSM 13023 / NCIMB 13966).